The following is a 382-amino-acid chain: PPE family protein PPE44 (382 aa).

Belongs to the mycobacterial PPE family.

It localises to the secreted. The protein localises to the cell wall. It is found in the cell surface. In terms of biological role, virulence factor that modulates host innate immune response. The protein is PPE family protein PPE44 of Mycobacterium tuberculosis (strain CDC 1551 / Oshkosh).